The sequence spans 291 residues: Phosphoribosylaminoimidazole-succinocarboxamide synthase (291 aa).

The protein belongs to the SAICAR synthetase family.

The enzyme catalyses 5-amino-1-(5-phospho-D-ribosyl)imidazole-4-carboxylate + L-aspartate + ATP = (2S)-2-[5-amino-1-(5-phospho-beta-D-ribosyl)imidazole-4-carboxamido]succinate + ADP + phosphate + 2 H(+). The protein operates within purine metabolism; IMP biosynthesis via de novo pathway; 5-amino-1-(5-phospho-D-ribosyl)imidazole-4-carboxamide from 5-amino-1-(5-phospho-D-ribosyl)imidazole-4-carboxylate: step 1/2. This Candida maltosa (Yeast) protein is Phosphoribosylaminoimidazole-succinocarboxamide synthase (ADE1).